The sequence spans 297 residues: Oxidoreductase aprR (297 aa).

This sequence belongs to the NmrA-type oxidoreductase family. Isoflavone reductase subfamily.

It participates in secondary metabolite biosynthesis. Oxidoreductase; part of the gene cluster that mediates the biosynthesis of the asperipin-2a, a bicyclic peptide that possesses two macrocyclic ether rings consisting of 14- and 17-membered paracyclophans. The pathway starts with the processing of the precursor aprA by kexin proteases to produce 11 identical copies of the hexapeptide Phe-Tyr-Tyr-Thr-Gly-Tyr. Macrocyclization of asperipin-2a may accompany an alpha-hydroxylation-dehydration sequence to give an imine, which is readily hydrolyzed to yield putative ketone intermediate. The reductase aprR may be required for the final reduction to yield asperipin-2a. The polypeptide is Oxidoreductase aprR (Aspergillus flavus (strain ATCC 200026 / FGSC A1120 / IAM 13836 / NRRL 3357 / JCM 12722 / SRRC 167)).